Reading from the N-terminus, the 416-residue chain is Serine hydroxymethyltransferase (416 aa).

(6S)-5,6,7,8-tetrahydrofolate contacts are provided by residues leucine 121 and 125 to 127; that span reads GHL. The residue at position 229 (lysine 229) is an N6-(pyridoxal phosphate)lysine.

Belongs to the SHMT family. Homodimer. It depends on pyridoxal 5'-phosphate as a cofactor.

Its subcellular location is the cytoplasm. The enzyme catalyses (6R)-5,10-methylene-5,6,7,8-tetrahydrofolate + glycine + H2O = (6S)-5,6,7,8-tetrahydrofolate + L-serine. Its pathway is one-carbon metabolism; tetrahydrofolate interconversion. It participates in amino-acid biosynthesis; glycine biosynthesis; glycine from L-serine: step 1/1. In terms of biological role, catalyzes the reversible interconversion of serine and glycine with tetrahydrofolate (THF) serving as the one-carbon carrier. This reaction serves as the major source of one-carbon groups required for the biosynthesis of purines, thymidylate, methionine, and other important biomolecules. Also exhibits THF-independent aldolase activity toward beta-hydroxyamino acids, producing glycine and aldehydes, via a retro-aldol mechanism. The sequence is that of Serine hydroxymethyltransferase from Neisseria gonorrhoeae.